Here is a 157-residue protein sequence, read N- to C-terminus: ATP synthase subunit b (157 aa).

The helical transmembrane segment at 1 to 21 (MHFLDESFWLAISFIIFVYLI) threads the bilayer.

This sequence belongs to the ATPase B chain family. F-type ATPases have 2 components, F(1) - the catalytic core - and F(0) - the membrane proton channel. F(1) has five subunits: alpha(3), beta(3), gamma(1), delta(1), epsilon(1). F(0) has three main subunits: a(1), b(2) and c(10-14). The alpha and beta chains form an alternating ring which encloses part of the gamma chain. F(1) is attached to F(0) by a central stalk formed by the gamma and epsilon chains, while a peripheral stalk is formed by the delta and b chains.

The protein localises to the cell inner membrane. In terms of biological role, f(1)F(0) ATP synthase produces ATP from ADP in the presence of a proton or sodium gradient. F-type ATPases consist of two structural domains, F(1) containing the extramembraneous catalytic core and F(0) containing the membrane proton channel, linked together by a central stalk and a peripheral stalk. During catalysis, ATP synthesis in the catalytic domain of F(1) is coupled via a rotary mechanism of the central stalk subunits to proton translocation. Component of the F(0) channel, it forms part of the peripheral stalk, linking F(1) to F(0). The sequence is that of ATP synthase subunit b from Rickettsia bellii (strain RML369-C).